We begin with the raw amino-acid sequence, 734 residues long: Photosystem I P700 chlorophyll a apoprotein A2 (734 aa).

A run of 8 helical transmembrane segments spans residues 46–69, 135–158, 175–199, 273–291, 330–353, 369–395, 417–439, and 517–535; these read IFAS…FHVA, LYIG…LHLQ, LNHH…HVAI, IAHH…GHMY, LHFQ…QHMY, AALY…IFFI, AIIS…LYVH, and FLVH…LILV. The [4Fe-4S] cluster site is built by Cys559 and Cys568. 2 consecutive transmembrane segments (helical) span residues 575–596 and 643–665; these read AFYL…YWHW and LSVW…MFLI. 3 residues coordinate chlorophyll a: His654, Met662, and Tyr670. Residue Trp671 participates in phylloquinone binding. The chain crosses the membrane as a helical span at residues 707-727; it reads VVGLAHFSVGYVFTYAAFLIA.

The protein belongs to the PsaA/PsaB family. As to quaternary structure, the PsaA/B heterodimer binds the P700 chlorophyll special pair and subsequent electron acceptors. PSI consists of a core antenna complex that captures photons, and an electron transfer chain that converts photonic excitation into a charge separation. The eukaryotic PSI reaction center is composed of at least 11 subunits. Requires P700 is a chlorophyll a/chlorophyll a' dimer, A0 is one or more chlorophyll a, A1 is one or both phylloquinones and FX is a shared 4Fe-4S iron-sulfur center. as cofactor.

Its subcellular location is the plastid. It is found in the chloroplast thylakoid membrane. The catalysed reaction is reduced [plastocyanin] + hnu + oxidized [2Fe-2S]-[ferredoxin] = oxidized [plastocyanin] + reduced [2Fe-2S]-[ferredoxin]. In terms of biological role, psaA and PsaB bind P700, the primary electron donor of photosystem I (PSI), as well as the electron acceptors A0, A1 and FX. PSI is a plastocyanin-ferredoxin oxidoreductase, converting photonic excitation into a charge separation, which transfers an electron from the donor P700 chlorophyll pair to the spectroscopically characterized acceptors A0, A1, FX, FA and FB in turn. Oxidized P700 is reduced on the lumenal side of the thylakoid membrane by plastocyanin. The chain is Photosystem I P700 chlorophyll a apoprotein A2 from Mesostigma viride (Green alga).